The sequence spans 102 residues: uncharacterized protein (102 aa).

This is an uncharacterized protein from Methanocaldococcus jannaschii (strain ATCC 43067 / DSM 2661 / JAL-1 / JCM 10045 / NBRC 100440) (Methanococcus jannaschii).